A 491-amino-acid polypeptide reads, in one-letter code: Pyruvate carboxylase subunit A (491 aa).

Residues 1 to 445 enclose the Biotin carboxylation domain; sequence MFSKILVANR…HTHFVDEYRR (445 aa). 3 residues coordinate ATP: Lys116, Glu200, and His235. The 197-residue stretch at 120-316 folds into the ATP-grasp domain; that stretch reads KKLMKKAGVP…LVKEQIRVAS (197 aa). The active site involves Arg291.

Heterooctamer of four A and four B subunits. Mg(2+) serves as cofactor. It depends on Mn(2+) as a cofactor. Co(2+) is required as a cofactor.

The catalysed reaction is hydrogencarbonate + pyruvate + ATP = oxaloacetate + ADP + phosphate + H(+). Its pathway is carbohydrate biosynthesis; gluconeogenesis. Inhibited by ADP and alpha-ketoglutarate. Functionally, pyruvate carboxylase catalyzes a 2-step reaction, involving the ATP-dependent carboxylation of the covalently attached biotin in the first step and the transfer of the carboxyl group to pyruvate in the second. This Methanothermobacter thermautotrophicus (strain ATCC 29096 / DSM 1053 / JCM 10044 / NBRC 100330 / Delta H) (Methanobacterium thermoautotrophicum) protein is Pyruvate carboxylase subunit A (pycA).